The primary structure comprises 131 residues: Large ribosomal subunit protein bL17 (131 aa).

Belongs to the bacterial ribosomal protein bL17 family. In terms of assembly, part of the 50S ribosomal subunit. Contacts protein L32.

The polypeptide is Large ribosomal subunit protein bL17 (Shewanella frigidimarina (strain NCIMB 400)).